The following is a 1302-amino-acid chain: Multidrug resistance protein homolog 65 (1302 aa).

Positions 1-23 (MERDEVSTSSSEGKSQEEAPMAE) are disordered. The Cytoplasmic segment spans residues 1–48 (MERDEVSTSSSEGKSQEEAPMAEGLEPTEPIAFLKLFRFSTYGEIGWL). The region spanning 48 to 369 (LFFGFIMCCI…TAPFLESFAT (322 aa)) is the ABC transmembrane type-1 1 domain. A helical transmembrane segment spans residues 49–69 (FFGFIMCCIKALTLPAVVIIY). At 70–118 (SEFTSMLVDRAMQFGTSSNVHALPLFGGGKTLTNASREENNEALYDDSI) the chain is on the extracellular side. The N-linked (GlcNAc...) asparagine glycan is linked to N103. A helical transmembrane segment spans residues 119–147 (SYGILLTIASVVMFISGIFSVDVFNMVAL). Residues 148–194 (RQVTRMRIKLFSSVIRQDIGWHDLASKQNFTQSMVDDVEKIRDGISE) are Cytoplasmic-facing. A helical transmembrane segment spans residues 195–215 (KVGHFVYLVVGFIITVAISFS). The Extracellular segment spans residues 216–223 (YGWKLTLA). The chain crosses the membrane as a helical span at residues 224 to 242 (VSSYIPLVILLNYYVAKFQ). The Cytoplasmic portion of the chain corresponds to 243 to 302 (GKLTAREQESYAGAGNLAEEILSSIRTVVSFGGEKSEVQRYENFLVPARKASQWKGAFSG). Residues 303–323 (LSDAVLKSMLYLSCAGAFWYG) traverse the membrane as a helical segment. The Extracellular segment spans residues 324 to 341 (VNLIIDDRNVENKEYTPA). Residues 342–362 (ILMIAFFGIIVGADNIARTAP) traverse the membrane as a helical segment. Residues 363–731 (FLESFATARG…LQLAKQEWCY (369 aa)) lie on the Cytoplasmic side of the membrane. One can recognise an ABC transporter 1 domain in the interval 405–641 (VEFQDVFFRY…EGAYYNMVRA (237 aa)). 440 to 447 (GSSGCGKS) lines the ATP pocket. A helical membrane pass occupies residues 732–753 (LILGTISAVAVGFLYPAFAVIF). The 289-residue stretch at 732–1020 (LILGTISAVA…SLAFTPAFSA (289 aa)) folds into the ABC transmembrane type-1 2 domain. Residues 754 to 776 (GEFYAALAEKDPEDALRRTAVLS) lie on the Extracellular side of the membrane. A helical membrane pass occupies residues 777–798 (WACLGLAFLTGLVCFLQTYLFN). Residues 799 to 852 (YAGIWLTTRMRAMTFNAMVNQEVGWFDDENNSVGALSARLSGEAVDIQGAIGYP) are Cytoplasmic-facing. The helical transmembrane segment at 853–873 (LSGMIQALSNFISSVSVAMYY) threads the bilayer. Residue N874 is a topological domain, extracellular. A helical transmembrane segment spans residues 875-894 (WKLALLCLANCPIIVGSVIL). At 895 to 956 (EAKMMSNAVV…VEVLIRQKLR (62 aa)) the chain is on the cytoplasmic side. Residues 957–977 (WRGVLNSTMQASAFFAYAVAL) traverse the membrane as a helical segment. At 978 to 993 (CYGGVLVSEGQLPFQD) the chain is on the extracellular side. A helical membrane pass occupies residues 994–1014 (IIKVSETLLYGSMMLAQSLAF). The Cytoplasmic segment spans residues 1015-1302 (TPAFSAALIA…AKLHKTQKDH (288 aa)). The region spanning 1059-1298 (VRYRGIQFRY…GGIYAKLHKT (240 aa)) is the ABC transporter 2 domain. 1094–1101 (GHSGCGKS) lines the ATP pocket.

Belongs to the ABC transporter superfamily. ABCB family. Multidrug resistance exporter (TC 3.A.1.201) subfamily.

It localises to the membrane. The enzyme catalyses ATP + H2O + xenobioticSide 1 = ADP + phosphate + xenobioticSide 2.. This is Multidrug resistance protein homolog 65 (Mdr65) from Drosophila melanogaster (Fruit fly).